Here is a 241-residue protein sequence, read N- to C-terminus: ATP synthase subunit a (241 aa).

6 consecutive transmembrane segments (helical) span residues 19–39, 80–100, 106–126, 135–155, 177–197, and 203–223; these read AVLI…AKMA, LVAA…IPGF, NINV…YEGI, FAHF…IEIV, LFLW…AYLL, and LLQT…AVAI.

It belongs to the ATPase A chain family. As to quaternary structure, F-type ATPases have 2 components, CF(1) - the catalytic core - and CF(0) - the membrane proton channel. CF(1) has five subunits: alpha(3), beta(3), gamma(1), delta(1), epsilon(1). CF(0) has three main subunits: a(1), b(2) and c(9-12). The alpha and beta chains form an alternating ring which encloses part of the gamma chain. CF(1) is attached to CF(0) by a central stalk formed by the gamma and epsilon chains, while a peripheral stalk is formed by the delta and b chains.

The protein resides in the cell inner membrane. Key component of the proton channel; it plays a direct role in the translocation of protons across the membrane. The polypeptide is ATP synthase subunit a (Sulfurovum sp. (strain NBC37-1)).